A 194-amino-acid chain; its full sequence is Cytochrome c biogenesis ATP-binding export protein CcmA (194 aa).

In terms of domain architecture, ABC transporter spans 5–194; sequence LALDGVACIR…LDELVMGVLA (190 aa). 37–44 is a binding site for ATP; sequence GPNGAGKS.

It belongs to the ABC transporter superfamily. CcmA exporter (TC 3.A.1.107) family. In terms of assembly, the complex is composed of two ATP-binding proteins (CcmA) and two transmembrane proteins (CcmB).

The protein resides in the cell inner membrane. The enzyme catalyses heme b(in) + ATP + H2O = heme b(out) + ADP + phosphate + H(+). In terms of biological role, part of the ABC transporter complex CcmAB involved in the biogenesis of c-type cytochromes; once thought to export heme, this seems not to be the case, but its exact role is uncertain. Responsible for energy coupling to the transport system. The protein is Cytochrome c biogenesis ATP-binding export protein CcmA of Sphingopyxis alaskensis (strain DSM 13593 / LMG 18877 / RB2256) (Sphingomonas alaskensis).